Consider the following 214-residue polypeptide: MKIIMLGAPGAGKGTQAKQIAAKYSIPHISTGDIFRANIKNGTELGKKAKTYMDQGALVPDELTCDLVMDRIQQDDCKNGFVLDGFPRTIPQAKALDDALTKIGEKMDYAIDVDVPDENIVNRMGGRRACLNCGATYHIVFNPTKVEGKCDACGADTVLRDDDKPETVQKRLAVYHEQTQPLIEYYDKQGILKSVDGTKPMDEVFSAIVGILGE.

10 to 15 contacts ATP; the sequence is GAGKGT. The interval 30–59 is NMP; sequence STGDIFRANIKNGTELGKKAKTYMDQGALV. Residues T31, R36, 57–59, 85–88, and Q92 each bind AMP; these read ALV and GFPR. Positions 126 to 163 are LID; the sequence is GRRACLNCGATYHIVFNPTKVEGKCDACGADTVLRDDD. An ATP-binding site is contributed by R127. 2 residues coordinate Zn(2+): C130 and C133. Residue 136 to 137 coordinates ATP; sequence TY. Zn(2+)-binding residues include C150 and C153. Residues R160 and R171 each coordinate AMP. K199 provides a ligand contact to ATP.

This sequence belongs to the adenylate kinase family. Monomer.

It is found in the cytoplasm. It catalyses the reaction AMP + ATP = 2 ADP. It participates in purine metabolism; AMP biosynthesis via salvage pathway; AMP from ADP: step 1/1. In terms of biological role, catalyzes the reversible transfer of the terminal phosphate group between ATP and AMP. Plays an important role in cellular energy homeostasis and in adenine nucleotide metabolism. In Agathobacter rectalis (strain ATCC 33656 / DSM 3377 / JCM 17463 / KCTC 5835 / VPI 0990) (Eubacterium rectale), this protein is Adenylate kinase.